A 623-amino-acid chain; its full sequence is Endoglucanase 7 (623 aa).

Residues 1–79 (MHPGNVWGGS…LGCVSVSRTV (79 aa)) are Cytoplasmic-facing. Residues 80–100 (FLWTVGSIAVLFLVVALPIII) traverse the membrane as a helical; Signal-anchor for type II membrane protein segment. Residues 101–623 (VKSLPRHKSA…TPPPPKAWKP (523 aa)) lie on the Extracellular side of the membrane. 7 N-linked (GlcNAc...) asparagine glycosylation sites follow: Asn-116, Asn-221, Asn-328, Asn-349, Asn-412, Asn-429, and Asn-464. His-517 is an active-site residue. Residue Asn-548 is glycosylated (N-linked (GlcNAc...) asparagine). Asp-565 is an active-site residue. A glycan (N-linked (GlcNAc...) asparagine) is linked at Asn-571. The active site involves Glu-574.

This sequence belongs to the glycosyl hydrolase 9 (cellulase E) family. In terms of tissue distribution, expressed in basal region of leaf blade and proximal parts of leaf and floral organ.

The protein resides in the membrane. The catalysed reaction is Endohydrolysis of (1-&gt;4)-beta-D-glucosidic linkages in cellulose, lichenin and cereal beta-D-glucans.. The chain is Endoglucanase 7 (KOR2) from Arabidopsis thaliana (Mouse-ear cress).